Reading from the N-terminus, the 52-residue chain is Large ribosomal subunit protein bL32c (52 aa).

This sequence belongs to the bacterial ribosomal protein bL32 family.

It is found in the plastid. The protein resides in the chloroplast. The polypeptide is Large ribosomal subunit protein bL32c (Morus indica (Mulberry)).